Consider the following 379-residue polypeptide: Guanine nucleotide-binding protein G(s) subunit alpha (379 aa).

The G-alpha domain occupies 38–379 (STHRLLLLGA…RMHLRQYELL (342 aa)). Residues 41-54 (RLLLLGAGESGKST) form a G1 motif region. GTP is bound by residues 46–53 (GAGESGKS), 182–188 (LRCRVLT), 207–211 (DVGGQ), 276–279 (NKQD), and A351. 2 residues coordinate Mg(2+): S53 and T188. The segment at 180-188 (DILRCRVLT) is G2 motif. Residues 203–212 (FHMFDVGGQR) are G3 motif. A G4 motif region spans residues 272–279 (ILFLNKQD). The interval 349–354 (TCAVDT) is G5 motif.

It belongs to the G-alpha family. G(s) subfamily. In terms of assembly, g proteins are composed of 3 units; alpha, beta and gamma. The alpha chain contains the guanine nucleotide binding site.

Guanine nucleotide-binding proteins (G proteins) are involved as modulators or transducers in various transmembrane signaling systems. The G(s) protein is involved in hormonal regulation of adenylate cyclase: it activates the cyclase in response to beta-adrenergic stimuli. This is Guanine nucleotide-binding protein G(s) subunit alpha from Schistosoma mansoni (Blood fluke).